The primary structure comprises 66 residues: MDKHARGDADLPPLTDHVDTDALDTLFGRDTPGAPRVSGASLEFDYADFVVTVESVGRIEVRDAGR.

Involved in cell-shape determination. Required for the formation of disks. The polypeptide is Disk-determining factor A (Haloferax volcanii (strain ATCC 29605 / DSM 3757 / JCM 8879 / NBRC 14742 / NCIMB 2012 / VKM B-1768 / DS2) (Halobacterium volcanii)).